Consider the following 221-residue polypeptide: 7-cyano-7-deazaguanine synthase (221 aa).

10-20 (FSGGQDSTTCL) provides a ligand contact to ATP. Zn(2+) is bound by residues Cys-186, Cys-195, Cys-198, and Cys-201.

Belongs to the QueC family. Homodimer. Zn(2+) is required as a cofactor.

It carries out the reaction 7-carboxy-7-deazaguanine + NH4(+) + ATP = 7-cyano-7-deazaguanine + ADP + phosphate + H2O + H(+). The protein operates within purine metabolism; 7-cyano-7-deazaguanine biosynthesis. Catalyzes the ATP-dependent conversion of 7-carboxy-7-deazaguanine (CDG) to 7-cyano-7-deazaguanine (preQ(0)). The polypeptide is 7-cyano-7-deazaguanine synthase (Geobacillus thermodenitrificans (strain NG80-2)).